The following is a 603-amino-acid chain: MSIRRLPETLVNRIAAGEVVERPAAALKELVENAIDAGATRIAVRIAEGGIARLEVEDDGCGMTAADMVLALERHATSKLPDDAIEAVTTLGFRGEALPSIASVARLTLESRTAGGDGWRRVVDNGAVVAEGPAALGQGTRVIVEHLFARVPARRKFLRSARSEYAACLDVVRRLAMARPDVGFTLEHDGRRVLDVQGGQDRVGRVAALTSRDLAANSIGVDLDRGEVHLGGVISLPTYNRGIADHQYLFVNGRPVKDRLLVGALRGAYADLLARDRHPVVALFLDVPTGEVDVNVHPAKTEVRFRDPQLIRGMIVGGLRRALDEHGFRSVQKPAEAALAAWQQEPVAPPPATGFLFDRRAGAAVHPFAAEVSLPAADVARVYDRLMPFTAPAPLAGRAEVAATPPPAAEAHPLGIARGQIAKTYIVAEAEDGLVIVDQHAAHERLVLETLKRGMAGQAVPSQGLLIPEVVELDEPACDRLEAAADGLAALGVELERFGPGAVMVRATPAMLGAIDCHRLVTDIADDLAGYDAALGLNERLELVAATMACHGSVRAGRTLSVAEMNALLRQMEVTPHSGQCNHGRPTWVKLAMGDVERLFGRK.

It belongs to the DNA mismatch repair MutL/HexB family.

Its function is as follows. This protein is involved in the repair of mismatches in DNA. It is required for dam-dependent methyl-directed DNA mismatch repair. May act as a 'molecular matchmaker', a protein that promotes the formation of a stable complex between two or more DNA-binding proteins in an ATP-dependent manner without itself being part of a final effector complex. This chain is DNA mismatch repair protein MutL, found in Sphingopyxis alaskensis (strain DSM 13593 / LMG 18877 / RB2256) (Sphingomonas alaskensis).